The primary structure comprises 471 residues: MNKGHVIQVMGPVVDVKFDNGQLPAIYNSLTVKIERPNEEPTILALEVALHLGDDSVRTIAMSSTDGLQRGAEVTDSGKAISVPVGEVTLGRVFNVLGEVIDLGEEIPADARRDSIHREAPTFEELSTTVEILETGIKVVDLLAPYIKGGKIGLFGGAGVGKTVLIQELINNIAQEHSGISVFAGVGERTREGNDLFFEMSDSGVIKQTAMVFGQMNEPPGARMRVALTGLTMAEYFRDEQGADVLLFIDNIFRFTQAGSEVSALLGRMPSAVGYQPTLATEMGKLQERITSTNKGSVTSIQAIYVPADDYTDPAPATTFAHLDATTNLERKLSEMGIYPAVDPLASTSRALSPEIVGAEHYAVATGVQRTIQRYRELQDIIAILGMDELSDEDKQTVERARRIQFFLSQNFHVAEQFTGQKGSYVPVKETVRSFKEILDGKWDHLPEDAFRLVGSIDEVVEKAKSMGVEV.

156 to 163 (GGAGVGKT) is a binding site for ATP.

It belongs to the ATPase alpha/beta chains family. In terms of assembly, F-type ATPases have 2 components, CF(1) - the catalytic core - and CF(0) - the membrane proton channel. CF(1) has five subunits: alpha(3), beta(3), gamma(1), delta(1), epsilon(1). CF(0) has three main subunits: a(1), b(2) and c(9-12). The alpha and beta chains form an alternating ring which encloses part of the gamma chain. CF(1) is attached to CF(0) by a central stalk formed by the gamma and epsilon chains, while a peripheral stalk is formed by the delta and b chains.

The protein localises to the cell membrane. The enzyme catalyses ATP + H2O + 4 H(+)(in) = ADP + phosphate + 5 H(+)(out). Functionally, produces ATP from ADP in the presence of a proton gradient across the membrane. The catalytic sites are hosted primarily by the beta subunits. The polypeptide is ATP synthase subunit beta (Lysinibacillus sphaericus (strain C3-41)).